A 367-amino-acid chain; its full sequence is 2-aminoethylphosphonate--pyruvate transaminase (367 aa).

N6-(pyridoxal phosphate)lysine is present on Lys194.

It belongs to the class-V pyridoxal-phosphate-dependent aminotransferase family. PhnW subfamily. As to quaternary structure, homodimer. The cofactor is pyridoxal 5'-phosphate.

The enzyme catalyses (2-aminoethyl)phosphonate + pyruvate = phosphonoacetaldehyde + L-alanine. Functionally, involved in phosphonate degradation. The polypeptide is 2-aminoethylphosphonate--pyruvate transaminase (Salmonella choleraesuis (strain SC-B67)).